The chain runs to 173 residues: Crossover junction endodeoxyribonuclease RuvC (173 aa).

Active-site residues include D8, E67, and D139. Residues D8, E67, and D139 each coordinate Mg(2+).

Belongs to the RuvC family. In terms of assembly, homodimer which binds Holliday junction (HJ) DNA. The HJ becomes 2-fold symmetrical on binding to RuvC with unstacked arms; it has a different conformation from HJ DNA in complex with RuvA. In the full resolvosome a probable DNA-RuvA(4)-RuvB(12)-RuvC(2) complex forms which resolves the HJ. Mg(2+) is required as a cofactor.

The protein localises to the cytoplasm. It carries out the reaction Endonucleolytic cleavage at a junction such as a reciprocal single-stranded crossover between two homologous DNA duplexes (Holliday junction).. Functionally, the RuvA-RuvB-RuvC complex processes Holliday junction (HJ) DNA during genetic recombination and DNA repair. Endonuclease that resolves HJ intermediates. Cleaves cruciform DNA by making single-stranded nicks across the HJ at symmetrical positions within the homologous arms, yielding a 5'-phosphate and a 3'-hydroxyl group; requires a central core of homology in the junction. The consensus cleavage sequence is 5'-(A/T)TT(C/G)-3'. Cleavage occurs on the 3'-side of the TT dinucleotide at the point of strand exchange. HJ branch migration catalyzed by RuvA-RuvB allows RuvC to scan DNA until it finds its consensus sequence, where it cleaves and resolves the cruciform DNA. This chain is Crossover junction endodeoxyribonuclease RuvC, found in Erwinia tasmaniensis (strain DSM 17950 / CFBP 7177 / CIP 109463 / NCPPB 4357 / Et1/99).